A 255-amino-acid polypeptide reads, in one-letter code: Probable esterase ATEG_07663 (255 aa).

Residues Ser-122, Asp-200, and His-227 each act as charge relay system in the active site.

This sequence belongs to the LovG family.

In terms of biological role, probable esterase; part of the cluster B that mediates the biosynthesis of azasperpyranones, members of the azaphilone family that exhibit anti-cancer activities. Azasperpyranones are synthesized by 2 clusters, A and B. Cluster A is responsible for the production of the polyhydric phenol moiety while the azaphilonoid scaffold is produced by the cluster B. The non-reducing polyketide synthase ATEG_03629 produces 5-methyl orsellinic acid, which is then reduced to 5-methyl orsellinic aldehyde by the NRPS-like protein ATEG_03630. 5-methyl orsellinic aldehyde is then first hydroxylated by the FAD-dependent monooxygenase ATEG_03635 and subsequently hydroxylated by the cytochrome P450 monooxygenase ATEG_03631 to produce the unstable polyhydric phenol precursor of azasperpyranones. On the other hand, the polyketide synthase ATEG_07659 is responsible for producing the 3,5-dimethyloctadienone moiety from acetyl-CoA, three malonyl-CoA, and two S-adenosyl methionines (SAM). The 3,5-dimethyloctadienone moiety is then loaded onto the SAT domain of ATEG_07661 and extended with four malonyl-CoA and one SAM, which leads to the formation of 2,4-dihydroxy-6-(5,7-dimethyl-2-oxo-trans-3-trans-5-nonadienyl)-3-methylbenzaldehyde (compound 8) after reductive release and aldol condensation. The FAD-dependent monooxygenase ATEG_07662 is the next enzyme in the biosynthesis sequence and hydroxylates the side chain at the benzylic position of compound 8. In Aspergillus nidulans, afoF, the ortholog of the FAD-dependent oxygenase ATEG_07660, is the key enzyme for the biosynthesis of asperfuranone by catalyzing the hydroxylation at C-8 of to prevent the formation of a six-membered ring hemiacetal intermediate and thus facilitating the formation of a five-membered ring to produce asperfuranone. In Aspergillus terreus, ATEG_07660 is probably not functional, which leads to the formation of the six-membered ring hemiacetal intermediate presperpyranone instead of asperfuranone. Finally, ATEG_03636 is involved in the condensation of the polyhydric phenol moiety produced by cluster A and the perasperpyranone precursor produced by cluster B, to yield azasperpyranone A. Further modifications of azasperpyranone A result in the production of derivatives, including azasperpyranone B to F. This is Probable esterase ATEG_07663 from Aspergillus terreus (strain NIH 2624 / FGSC A1156).